Reading from the N-terminus, the 606-residue chain is Mannan endo-1,4-beta-mannosidase A (606 aa).

The first 19 residues, 1–19, serve as a signal peptide directing secretion; sequence MKSLNVILTLLSLIISVLS. The 119-residue stretch at 22–140 folds into the CBM6 domain; it reads VYYEAEDGKL…WMWVDAFVIN (119 aa). Residues 164–458 form the GH26 domain; the sequence is PAAKKLYDFL…FNHKTVMNMD (295 aa). W285 contacts substrate. The active-site Proton donor is E318. Substrate is bound by residues W323 and Y378. E406 (nucleophile) is an active-site residue. Positions 472–489 are linker; that stretch reads SGSSHNGNSESNSNTGNS. CBM10 domains lie at 491-527, 530-566, and 569-605; these read ECWS…CGIV, SCWS…CGIV, and SCWA…CGIL. W493 lines the substrate pocket.

This sequence belongs to the glycosyl hydrolase 26 family.

It catalyses the reaction Random hydrolysis of (1-&gt;4)-beta-D-mannosidic linkages in mannans, galactomannans and glucomannans.. Hydrolyzes 1,4-beta linked polysaccharide backbones of mannans, one of the major hemicellulose components in hardwoods and softwoods. Shows very high activity against mannohexaose but not against mannopentaose and smaller mannooligosaccharides. The major products released from mannooligosaccharide hydrolysis are mannose and mannobiose. The reiterated 40 AA domain is involved in binding the cellulase-hemicellulase complex. The protein is Mannan endo-1,4-beta-mannosidase A (MANA) of Piromyces sp.